We begin with the raw amino-acid sequence, 515 residues long: Protein aaim-1 (515 aa).

The N-terminal stretch at 1–16 (MRLLFFFSILYTASLC) is a signal peptide. N-linked (GlcNAc...) asparagine glycosylation is found at asparagine 46 and asparagine 127. Residues 248–267 (RRTDPNSKFKPRPTTSQSNG) are disordered. A glycan (N-linked (GlcNAc...) asparagine) is linked at asparagine 447.

In terms of tissue distribution, expressed in the terminal bulb of the pharynx and the posterior of the intestine (at protein level). Expressed by intestinal cells and secreted into the intestinal lumen (at protein level).

The protein localises to the secreted. In terms of biological role, plays a role in promoting resistance to bacterial pathogens such as P.aeruginosa by inhibiting bacterial intestinal colonization. (Microbial infection) Promotes infection by microsporidian pathogens such as N.parisii in the early larval stages of development. Involved in ensuring the proper orientation and location of the spore proteins of N.parisii during intestinal cell invasion. The chain is Protein aaim-1 from Caenorhabditis elegans.